The chain runs to 673 residues: Armadillo repeat-containing protein 8 (673 aa).

An N-acetylalanine modification is found at Ala-2. 14 ARM repeats span residues 51-92, 95-134, 138-176, 178-217, 224-265, 269-309, 313-352, 374-413, 416-455, 458-497, 501-540, 543-585, 588-627, and 634-673; these read NKQK…SLAM, ENNV…TIFT, TPEE…HCCK, PDHQ…VLAF, MTLV…YMCR, IRTD…YLIE, ELQR…HDLK, DIRK…SLSR, QQLR…NLLL, SPSK…NMAF, QKIK…NLLS, PHID…NIAD, TAKD…NLIW, and QERQ…QYLA. Ser-337 bears the Phosphoserine mark. Ser-512 carries the post-translational modification Phosphoserine.

As to quaternary structure, identified in the CTLH complex that contains GID4, RANBP9 and/or RANBP10, MKLN1, MAEA, RMND5A (or alternatively its paralog RMND5B), GID8, ARMC8, WDR26 and YPEL5. Within this complex, MAEA, RMND5A (or alternatively its paralog RMND5B), GID8, WDR26, and RANBP9 and/or RANBP10 form the catalytic core, while GID4, MKLN1, ARMC8 and YPEL5 have ancillary roles.

It is found in the nucleus. It localises to the cytoplasm. Its function is as follows. Component of the CTLH E3 ubiquitin-protein ligase complex that selectively accepts ubiquitin from UBE2H and mediates ubiquitination and subsequent proteasomal degradation of the transcription factor HBP1. The sequence is that of Armadillo repeat-containing protein 8 (ARMC8) from Homo sapiens (Human).